The primary structure comprises 442 residues: Putative helicase 161L (442 aa).

Positions 88–241 constitute a Helicase ATP-binding domain; that stretch reads IDILEKNHSV…LFPIFFGKEK (154 aa). Residue 101–108 participates in ATP binding; the sequence is CFTGFGKT. The DEAH box signature appears at 194–197; sequence DEVH.

Belongs to the DEAD box helicase family. DEAH subfamily.

The sequence is that of Putative helicase 161L from Invertebrate iridescent virus 6 (IIV-6).